The primary structure comprises 96 residues: Co-chaperonin GroES (96 aa).

It belongs to the GroES chaperonin family. As to quaternary structure, heptamer of 7 subunits arranged in a ring. Interacts with the chaperonin GroEL.

The protein resides in the cytoplasm. Functionally, together with the chaperonin GroEL, plays an essential role in assisting protein folding. The GroEL-GroES system forms a nano-cage that allows encapsulation of the non-native substrate proteins and provides a physical environment optimized to promote and accelerate protein folding. GroES binds to the apical surface of the GroEL ring, thereby capping the opening of the GroEL channel. The chain is Co-chaperonin GroES from Coxiella burnetii (strain Dugway 5J108-111).